The following is a 96-amino-acid chain: MASIKPLGDRVLVEPRQEAEEKIGSIFVPDTAKEKPQEGKVVEIGSGKYEDGKLIPLEVKVGDTVLYGKYSGTEIKSEGKEYLIIRESDILAVVKK.

This sequence belongs to the GroES chaperonin family. In terms of assembly, heptamer of 7 subunits arranged in a ring. Interacts with the chaperonin GroEL.

The protein resides in the cytoplasm. Together with the chaperonin GroEL, plays an essential role in assisting protein folding. The GroEL-GroES system forms a nano-cage that allows encapsulation of the non-native substrate proteins and provides a physical environment optimized to promote and accelerate protein folding. GroES binds to the apical surface of the GroEL ring, thereby capping the opening of the GroEL channel. This Leptospira interrogans serogroup Icterohaemorrhagiae serovar copenhageni (strain Fiocruz L1-130) protein is Co-chaperonin GroES.